Consider the following 673-residue polypeptide: NACHT, LRR and PYD domains-containing protein 10 (673 aa).

A Pyrin domain is found at 1 to 92; that stretch reads MALARANSPQ…VDYLNQVCLN (92 aa). The 307-residue stretch at 163–469 folds into the NACHT domain; sequence PIVVMQGSAG…AMSFLVKEDQ (307 aa). 169-176 contacts ATP; it reads GSAGTGKT. The interval 578–673 is disordered; it reads SDKKKSVSVT…DGEMIDKMNG (96 aa). The span at 584 to 597 shows a compositional bias: low complexity; that stretch reads VSVTSSFSSGKVQS. Basic and acidic residues predominate over residues 633–648; sequence ASREKGHMEMNDKEDG. Acidic residues predominate over residues 649 to 658; sequence GVEEQEDEEG. Positions 659–673 are enriched in basic and acidic residues; it reads QTLKKDGEMIDKMNG.

This sequence belongs to the NLRP family. Oligomerizes. Interacts with PYCARD. Also interacts with CASP1 and IL1B. Interacts with NOD1 and components of the NOD1 signaling pathway including RIPK2, NR2C2/TAK1 and IKBKG/NEMO. In terms of tissue distribution, expressed in skin, tongue, heart, colon and several cell lines of hematopoietic and myocytic origin but not in kidney, skeletal muscle, spleen, liver, lung, thymus, brain or small intestine (at protein level).

It localises to the cytoplasm. The protein resides in the cell membrane. Its function is as follows. Inhibits autoprocessing of CASP1, CASP1-dependent IL1B secretion, PYCARD aggregation and PYCARD-mediated apoptosis but not apoptosis induced by FAS or BID. Displays anti-inflammatory activity. Required for immunity against C.albicans infection. Involved in the innate immune response by contributing to pro-inflammatory cytokine release in response to invasive bacterial infection. Contributes to T-cell-mediated inflammatory responses in the skin. Plays a role in protection against periodontitis through its involvement in induction of IL1A via ERK activation in oral epithelial cells infected with periodontal pathogens. Exhibits both ATPase and GTPase activities. This chain is NACHT, LRR and PYD domains-containing protein 10 (Nlrp10), found in Mus musculus (Mouse).